Reading from the N-terminus, the 360-residue chain is Insulin gene enhancer protein ISL-2 (360 aa).

LIM zinc-binding domains follow at residues 25 to 86 and 87 to 149; these read AMCV…RLFG and IKCA…LLER. The segment at 151 to 177 is disordered; that stretch reads AAGSPRSPGPLPGTPPGLHLPDAGSGQ. Ser-154 and Ser-157 each carry phosphoserine. The segment at residues 192-251 is a DNA-binding region (homeobox); sequence TTRVRTVLNEKQLHTLRTCYAANPRPDALMKEQLVEMTGLSPRVIRVWFQNKRCKDKKKS. The segment at 273 to 302 is LIM-binding domain (LID); that stretch reads GTLLVAGSPSAHENAVQGSAVEVQTYQPPW. Ser-280 bears the Phosphoserine mark. Residues 328 to 337 are compositionally biased toward low complexity; it reads SGSLGNSSGS. The interval 328 to 360 is disordered; the sequence is SGSLGNSSGSDVTSLSSQLPDTPNSMVPSPVET. The span at 338–360 shows a compositional bias: polar residues; the sequence is DVTSLSSQLPDTPNSMVPSPVET.

In terms of assembly, interacts with LHX4.

It localises to the nucleus. In terms of biological role, transcriptional factor that defines subclasses of motoneurons that segregate into columns in the spinal cord and select distinct axon pathways. The chain is Insulin gene enhancer protein ISL-2 (Isl2) from Rattus norvegicus (Rat).